A 476-amino-acid polypeptide reads, in one-letter code: Acyl-lipid omega-13 desaturase (476 aa).

The 66-residue stretch at 10 to 75 folds into the Cytochrome b5 heme-binding domain; sequence GPALPSIPHQ…HLRVLERFRV (66 aa). Residues His-37 and His-60 each contribute to the heme site. 2 helical membrane-spanning segments follow: residues 146–166 and 168–188; these read PFVI…KLWW and GAFI…AAMV. A Histidine box-1 motif is present at residues 189 to 193; the sequence is HDGGH. A Histidine box-2 motif is present at residues 224–229; that stretch reads HNILHH. Helical transmembrane passes span 267–287, 315–335, and 343–363; these read FFSH…ISPL, YHST…TPFL, and LLLT…IAQV. Positions 410–414 match the Histidine box-3 motif; that stretch reads QSLHH.

Belongs to the fatty acid desaturase type 1 family.

The protein resides in the membrane. It carries out the reaction a (9Z,12Z)-octadecadienoyl-containing glycerolipid + 2 Fe(II)-[cytochrome b5] + O2 + 2 H(+) = a (5Z,9Z,12Z)-octadecatrienoyl-containing glycerolipid + 2 Fe(III)-[cytochrome b5] + 2 H2O. The catalysed reaction is (9Z,12Z,15Z)-octadecatrienoyl-containing glycerolipid + 2 Fe(II)-[cytochrome b5] + O2 + 2 H(+) = a (5Z,9Z,12Z,15Z)-octadecatetraenoyl-containing glycerolipid + 2 Fe(III)-[cytochrome b5] + 2 H2O. The protein operates within lipid metabolism; polyunsaturated fatty acid biosynthesis. Front-end desaturase having a omega-13 desaturase activity for omega-9 unsaturated C18/C20 fatty acids. Strong substrate preferences for linoleic acid and alpha-linolenic acid for the production of pinolenic and coniferonic acids respectively. No desaturase activity for dihomo gamma-linolenic acid and eicosatertraenoic acid. This chain is Acyl-lipid omega-13 desaturase, found in Chlamydomonas reinhardtii (Chlamydomonas smithii).